The primary structure comprises 338 residues: Nicotinate-nucleotide--dimethylbenzimidazole phosphoribosyltransferase (338 aa).

Catalysis depends on Glu306, which acts as the Proton acceptor.

Belongs to the CobT family.

It carries out the reaction 5,6-dimethylbenzimidazole + nicotinate beta-D-ribonucleotide = alpha-ribazole 5'-phosphate + nicotinate + H(+). It participates in nucleoside biosynthesis; alpha-ribazole biosynthesis; alpha-ribazole from 5,6-dimethylbenzimidazole: step 1/2. Catalyzes the synthesis of alpha-ribazole-5'-phosphate from nicotinate mononucleotide (NAMN) and 5,6-dimethylbenzimidazole (DMB). The chain is Nicotinate-nucleotide--dimethylbenzimidazole phosphoribosyltransferase from Cereibacter sphaeroides (strain KD131 / KCTC 12085) (Rhodobacter sphaeroides).